Reading from the N-terminus, the 539-residue chain is Tripartite motif-containing protein 26 (539 aa).

Residues 16 to 57 (CSICLDYLRDPVTIDCGHVFCRSCTTDVRPISGSRPVCPLCK) form an RING-type zinc finger. A B box-type zinc finger spans residues 97 to 138 (QDAKLCERHREKLHYYCEDDGKLLCVMCRESREHRPHTAVLM). Zn(2+) is bound by residues C102, H105, C124, and H130. Residues 188 to 227 (IVAEFEQGHQFLREREEHLLEQLAKLEQELTEGREKFKSR) are a coiled coil. In terms of domain architecture, B30.2/SPRY spans 295 to 539 (RGLREFQGKL…WPGTRLLLRP (245 aa)). The interval 376–437 (REGWSEDEEE…EEEEEVLESC (62 aa)) is disordered. Acidic residues predominate over residues 380-434 (SEDEEEGDEEEEGEEEEEEEEAGYGDGYDDWETDEDEESLGDEEEEEEEEEEEVL).

The protein belongs to the TRIM/RBCC family. In terms of assembly, interacts with TBK1; this interaction bridges together TBK1 and NEMO in order to activate TBK1. Interacts with INCA1. Autoubiquitinates upon viral infection. In turn, autoubiquitinated TRIM26 recruits NEMO and bridges TBK1-NEMO interaction.

The protein resides in the cytoplasm. It is found in the nucleus. The enzyme catalyses S-ubiquitinyl-[E2 ubiquitin-conjugating enzyme]-L-cysteine + [acceptor protein]-L-lysine = [E2 ubiquitin-conjugating enzyme]-L-cysteine + N(6)-ubiquitinyl-[acceptor protein]-L-lysine.. In terms of biological role, E3 ubiquitin-protein ligase which regulates the IFN-beta production and antiviral response downstream of various DNA-encoded pattern-recognition receptors (PRRs). Also plays a central role in determining the response to different forms of oxidative stress by controlling levels of DNA glycosylases NEIL1, NEIL3 and NTH1 that are involved in repair of damaged DNA. Promotes nuclear IRF3 ubiquitination and proteasomal degradation. Bridges together TBK1 and NEMO during the innate response to viral infection leading to the activation of TBK1. Positively regulates LPS-mediated inflammatory innate immune response by catalyzing the 'Lys-11'-linked polyubiquitination of TAB1 to enhance its activation and subsequent NF-kappa-B and MAPK signaling. In a manner independent of its catalytic activity, inhibits WWP2, a SOX2-directed E3 ubiquitin ligase, and thus protects SOX2 from polyubiquitination and proteasomal degradation. Ubiquitinates the histone acetyltransferase protein complex component PHF20 and thereby triggers its degradation in the nucleus after its recruitment by the histone demethylase KDM6B, serving as a scaffold protein. Upon induction by TGF-beta, ubiquitinates the TFIID component TAF7 for proteasomal degradation. Induces ferroptosis by ubiquitinating SLC7A11, a critical protein for lipid reactive oxygen species (ROS) scavenging. The sequence is that of Tripartite motif-containing protein 26 (TRIM26) from Pan troglodytes (Chimpanzee).